The primary structure comprises 120 residues: Ribonuclease P protein component (120 aa).

Belongs to the RnpA family. As to quaternary structure, consists of a catalytic RNA component (M1 or rnpB) and a protein subunit.

The catalysed reaction is Endonucleolytic cleavage of RNA, removing 5'-extranucleotides from tRNA precursor.. Functionally, RNaseP catalyzes the removal of the 5'-leader sequence from pre-tRNA to produce the mature 5'-terminus. It can also cleave other RNA substrates such as 4.5S RNA. The protein component plays an auxiliary but essential role in vivo by binding to the 5'-leader sequence and broadening the substrate specificity of the ribozyme. This is Ribonuclease P protein component from Pseudoalteromonas atlantica (strain T6c / ATCC BAA-1087).